Consider the following 701-residue polypeptide: Rab-like protein 6 (701 aa).

Met-1 carries the N-acetylmethionine modification. A small GTPase-like region spans residues 39–279 (GVQYNMKIVI…IFLEMMEARS (241 aa)). GTP-binding positions include 50 to 57 (GDRNTGKT), 100 to 104 (DVVDK), and 177 to 179 (YRD). A disordered region spans residues 279–701 (SRGHASPLTT…LRGGGDYEAL (423 aa)). Positions 284-315 (SPLTTSGQSPSSGSQSPVVPPSTVSTGSSSPS) are enriched in low complexity. A compositionally biased stretch (pro residues) spans 316–344 (TPQPVLQPPLQAPPAPPAPAEAPPLPAAP). 5 positions are modified to phosphoserine: Ser-394, Ser-416, Ser-418, Ser-461, and Ser-462. Residues 495–506 (ALGPPRDAAPRA) are compositionally biased toward low complexity. Ser-552 is subject to Phosphoserine. Residues 555-569 (DAQRRAGEFPVREDL) are compositionally biased toward basic and acidic residues. Ser-570 is modified (phosphoserine). The residue at position 573 (Thr-573) is a Phosphothreonine. The segment covering 580–589 (VQPPAPPKPL) has biased composition (pro residues). Over residues 608 to 626 (EPGREDSSEQDKEGRPPAK) the composition is skewed to basic and acidic residues. Phosphoserine is present on residues Ser-614 and Ser-615. An interaction with CDKN2A region spans residues 629–667 (KKKKKKGREEEDKAAKKRSKHKKSRERADDKGRDERRRR). Positions 643–653 (AKKRSKHKKSR) are enriched in basic residues. A compositionally biased stretch (basic and acidic residues) spans 654 to 665 (ERADDKGRDERR). Over residues 683 to 701 (LGGGAPSGPLRGGGDYEAL) the composition is skewed to gly residues.

Belongs to the small GTPase superfamily. Rab family.

It localises to the nucleus. Its subcellular location is the cytoplasm. Functionally, may enhance cellular proliferation. May reduce growth inhibitory activity of CDKN2A. The protein is Rab-like protein 6 (RABL6) of Bos taurus (Bovine).